The chain runs to 175 residues: Alpha-crystallin B chain (175 aa).

Met1 carries the post-translational modification N-acetylmethionine. Position 19 is a phosphoserine (Ser19). O-linked (GlcNAc) serine glycosylation occurs at Ser41. Ser45 and Ser59 each carry phosphoserine. In terms of domain architecture, sHSP spans 56-164 (RAPSWIDTGL…PERTIPITRE (109 aa)). Residue His83 coordinates Zn(2+). An N6-acetyllysine modification is found at Lys92. Zn(2+) is bound by residues His104, Glu106, His111, and His119. A disordered region spans residues 142-175 (VLTVNGPRRQASGPERTIPITREEKPAVTAAPKK). Position 166 is an N6-acetyllysine (Lys166). Thr170 carries an O-linked (GlcNAc) threonine glycan.

This sequence belongs to the small heat shock protein (HSP20) family. As to quaternary structure, heteromer composed of three CRYAA and one CRYAB subunits. Aggregates with homologous proteins, including the small heat shock protein HSPB1, to form large heteromeric complexes. Inter-subunit bridging via zinc ions enhances stability, which is crucial as there is no protein turn over in the lens. Interacts with HSPBAP1 and TTN/titin. Interacts with TMEM109; in the cellular response to DNA damage. Interacts with DES; binds rapidly during early stages of DES filament assembly and a reduced binding seen in the later stages. Interacts with TMED10; the interaction mediates the translocation from the cytoplasm into the ERGIC (endoplasmic reticulum-Golgi intermediate compartment) and thereby secretion. Interacts with ATP6V1A and with MTOR, forming a ternary complex.

The protein localises to the cytoplasm. Its subcellular location is the nucleus. It localises to the secreted. It is found in the lysosome. Functionally, may contribute to the transparency and refractive index of the lens. Has chaperone-like activity, preventing aggregation of various proteins under a wide range of stress conditions. In lens epithelial cells, stabilizes the ATP6V1A protein, preventing its degradation by the proteasome. The protein is Alpha-crystallin B chain (CRYAB) of Sus scrofa (Pig).